The following is a 297-amino-acid chain: Manganese efflux system protein MneP (297 aa).

Helical transmembrane passes span 12 to 32, 43 to 63, 85 to 105, 111 to 131, 155 to 175, and 177 to 197; these read VALIALIANLILMAGKVFFGL, GIHSAADVVASIAVLAVIGIS, IVGIILVIVSVYILIEAILSF, VPQYSALFAALISYVAKEILY, GDIVASLAAFIGVLLAIIGNS, and GWSYLLYADAIASAIVAYLIF.

Belongs to the cation diffusion facilitator (CDF) transporter (TC 2.A.4) family.

The protein resides in the cell membrane. Functionally, primary efflux pump for manganese. May prevent manganese intoxication. The sequence is that of Manganese efflux system protein MneP from Bacillus subtilis (strain 168).